We begin with the raw amino-acid sequence, 428 residues long: MAENDVDNELLDYEDDEVETAAGGDGAEAPAKKDVKGSYVSIHSSGFRDFLLKPELLRAIVDCGFEHPSEVQHECIPQAILGMDVLCQAKSGMGKTAVFVLATLQQLEPVTGQVSVLVMCHTRELAFQISKEYERFSKYMPNVKVAVFFGGLSIKKDEEVLKKNCPHIVVGTPGRILALARNKSLNLKHIKHFILDECDKMLEQLDMRRDVQEIFRMTPHEKQVMMFSATLSKEIRPVCRKFMQDPMEIFVDDETKLTLHGLQQYYVKLKDNEKNRKLFDLLDVLEFNQVVIFVKSVQRCIALAQLLVEQNFPAIAIHRGMPQEERLSRYQQFKDFQRRILVATNLFGRGMDIERVNIAFNYDMPEDSDTYLHRVARAGRFGTKGLAITFVSDENDAKILNDVQDRFEVNISELPDEIDISSYIEQTR.

Acidic residues predominate over residues 1-19 (MAENDVDNELLDYEDDEVE). The tract at residues 1-31 (MAENDVDNELLDYEDDEVETAAGGDGAEAPA) is disordered. Ala2 is modified (N-acetylalanine). Lys36 carries the N6-acetyllysine; alternate modification. A Glycyl lysine isopeptide (Lys-Gly) (interchain with G-Cter in SUMO2); alternate cross-link involves residue Lys36. Ser38 and Ser41 each carry phosphoserine. The Q motif motif lies at 45-73 (SGFRDFLLKPELLRAIVDCGFEHPSEVQH). One can recognise a Helicase ATP-binding domain in the interval 76-249 (IPQAILGMDV…RKFMQDPMEI (174 aa)). Residue 89–96 (AKSGMGKT) participates in ATP binding. The residue at position 172 (Thr172) is a Phosphothreonine. Residues 196–199 (DECD) carry the DECD box motif. Residues 261–422 (GLQQYYVKLK…ELPDEIDISS (162 aa)) form the Helicase C-terminal domain.

Belongs to the DEAD box helicase family. DECD subfamily. Homodimer, and heterodimer with DDX39A. DDX39B interacts with the THO subcomplex to form the THO-DDX39B complex which multimerizes into a 28-subunit tetrameric assembly. Component of the transcription/export (TREX) complex at least composed of ALYREF/THOC4, DDX39B, SARNP/CIP29, CHTOP and the THO subcomplex; in the complex interacts with THOC2. THOC1-THOC2-THOC3-DDX39B subcomplex is sufficient for the interaction with export factor NXF1-NXT1. TREX seems to have a dynamic structure involving ATP-dependent remodeling. Within the TREX complex bridges ALYREF/THOC4 and the THO subcomplex, and, in a ATP-dependent manner, ALYREF/THOC4 and SARNP/CIP29. Component of the spliceosome. Interacts directly with U2AF2. Interacts with RBM8A, RNPS1 and SRRM1, FYTTD1/UIF, THOC1, MX1 and POLDIP3. Interacts with LUZP4. Interacts with SARNP/CIP29 (via the C-terminal domain); the interaction is direct and facilitates RNA binding of DDX39B. As to quaternary structure, (Microbial infection) Interacts with human cytomegalovirus/HHV-5 protein UL69.

The protein localises to the nucleus. It is found in the nucleus speckle. It localises to the cytoplasm. The enzyme catalyses ATP + H2O = ADP + phosphate + H(+). Functionally, involved in nuclear export of spliced and unspliced mRNA. Component of the TREX complex which is thought to couple mRNA transcription, processing and nuclear export, and specifically associates with spliced mRNA and not with unspliced pre-mRNA. The TREX complex is recruited to spliced mRNAs by a transcription-independent mechanism, binds to mRNA upstream of the exon-junction complex (EJC) and is recruited in a splicing- and cap-dependent manner to a region near the 5' end of the mRNA where it functions in mRNA export to the cytoplasm via the TAP/NXF1 pathway. The THOC1-THOC2-THOC3 core complex alone is sufficient to promote ATPase activity of DDX39B; in the complex THOC2 is the only component that directly interacts with DDX39B. Associates with SARNP/CIP29, which facilitates RNA binding of DDX39B and likely plays a role in mRNA export. May undergo several rounds of ATP hydrolysis during assembly of TREX to drive subsequent loading of components such as ALYREF/THOC4 and CHTOP onto mRNA. Also associates with pre-mRNA independent of ALYREF/THOC4. Involved in the nuclear export of intronless mRNA; the ATP-bound form is proposed to recruit export adapter ALYREF/THOC4 to intronless mRNA; its ATPase activity is cooperatively stimulated by RNA and ALYREF/THOC4 and ATP hydrolysis is thought to trigger the dissociation from RNA to allow the association of ALYREF/THOC4 and the NXF1-NXT1 heterodimer. Involved in transcription elongation and genome stability. In terms of biological role, splice factor that is required for the first ATP-dependent step in spliceosome assembly and for the interaction of U2 snRNP with the branchpoint. Has both RNA-stimulated ATP binding/hydrolysis activity and ATP-dependent RNA unwinding activity. Even with the stimulation of RNA, the ATPase activity is weak. Can only hydrolyze ATP but not other NTPs. The RNA stimulation of ATPase activity does not have a strong preference for the sequence and length of the RNA. However, ssRNA stimulates the ATPase activity much more strongly than dsRNA. Can unwind 5' or 3' overhangs or blunt end RNA duplexes in vitro. The ATPase and helicase activities are not influenced by U2AF2; the effect of ALYREF/THOC4 is reported conflictingly with [PubMed:23299939] reporting a stimulatory effect. Its function is as follows. (Microbial infection) The TREX complex is essential for the export of Kaposi's sarcoma-associated herpesvirus (KSHV) intronless mRNAs and infectious virus production. This chain is Spliceosome RNA helicase DDX39B, found in Homo sapiens (Human).